We begin with the raw amino-acid sequence, 96 residues long: ATP synthase subunit c (96 aa).

2 helical membrane passes run 28-50 (LGAGVAMGIGAIGPGVGEGNIGA) and 75-95 (AVTESTGLYSLVVALILLFVL).

The protein belongs to the ATPase C chain family. F-type ATPases have 2 components, F(1) - the catalytic core - and F(0) - the membrane proton channel. F(1) has five subunits: alpha(3), beta(3), gamma(1), delta(1), epsilon(1). F(0) has three main subunits: a(1), b(2) and c(10-14). The alpha and beta chains form an alternating ring which encloses part of the gamma chain. F(1) is attached to F(0) by a central stalk formed by the gamma and epsilon chains, while a peripheral stalk is formed by the delta and b chains.

It localises to the cell inner membrane. In terms of biological role, f(1)F(0) ATP synthase produces ATP from ADP in the presence of a proton or sodium gradient. F-type ATPases consist of two structural domains, F(1) containing the extramembraneous catalytic core and F(0) containing the membrane proton channel, linked together by a central stalk and a peripheral stalk. During catalysis, ATP synthesis in the catalytic domain of F(1) is coupled via a rotary mechanism of the central stalk subunits to proton translocation. Its function is as follows. Key component of the F(0) channel; it plays a direct role in translocation across the membrane. A homomeric c-ring of between 10-14 subunits forms the central stalk rotor element with the F(1) delta and epsilon subunits. The sequence is that of ATP synthase subunit c from Petrotoga mobilis (strain DSM 10674 / SJ95).